The chain runs to 225 residues: Germin-like protein 8-7 (225 aa).

A signal peptide spans 1-23 (MASPSSFCLLAVLLALVSWQAIA). Cysteines 33 and 48 form a disulfide. One can recognise a Cupin type-1 domain in the interval 63-213 (AMLDTPRKTN…AFQVEKGTID (151 aa)). A glycan (N-linked (GlcNAc...) asparagine) is linked at Asn77. 3 residues coordinate Mn(2+): His110, His112, and Glu117. N-linked (GlcNAc...) asparagine glycosylation occurs at Asn136. His158 provides a ligand contact to Mn(2+).

The protein belongs to the germin family. In terms of assembly, oligomer (believed to be a pentamer but probably hexamer).

Its subcellular location is the secreted. The protein localises to the extracellular space. The protein resides in the apoplast. Plays a role in broad-spectrum disease resistance. Probably has no oxalate oxidase activity even if the active site is conserved. The sequence is that of Germin-like protein 8-7 (GER6) from Oryza sativa subsp. japonica (Rice).